The primary structure comprises 515 residues: Acetyltransferase sphE (515 aa).

Catalysis depends on proton acceptor residues histidine 184 and aspartate 438.

The protein belongs to the plant acyltransferase family. In terms of assembly, monomer.

It carries out the reaction sphingofungin B + acetyl-CoA = sphingofungin C + CoA. It participates in secondary metabolite biosynthesis. Its function is as follows. Acetyltransferase; part of the gene cluster that mediates the biosynthesis of sphingofungins, bioactive molecules acting as sphingolipid inhibitors via inhibiting serine palmitoyl transferase (SPT). Within the pathway, sphE catalyzes the O-acetylation of the C-5 hydroxyl group of sphingofungin B to produce sphingofungin C. SphE can also convert sphingofungin B1 into sphingofungin C1 and sphingofungin B2 into sphingofungin C2. Sphingofungin biosynthesis starts with the PKS sphB that produces an C18 polyketide precursor 3-hydroxyoctadeca-4,10-dienoyl-ACP containing one delta-6 desaturation and one delta-12 desaturation. The aminoacyl transferase sphA uses the sphB product to produce 3-keto-presphingofungin by adding an aminomalonate molecule. SphF then reduces the C-3 ketone of 3-keto-presphingofungin which leads to presphingofungin. The cytochrome P450 monooxygenase sphH converts presphingofungin into sphingofungin B1 which is further converted to sphingofungin B by the dioxygenase sphC. SphC is also able to convert presphingofungin into sphingofungin B2. The acetyltransferase sphE acetylates sphingofungin B to produce sphingofungin C, but can also convert sphingofungin B1 into sphingofungin C1 and sphingofungin B2 into sphingofungin C2. Finally, sphingofungin C can be spontaneously converted into sphingofungin D. The chain is Acetyltransferase sphE from Aspergillus fumigatus (strain CBS 144.89 / FGSC A1163 / CEA10) (Neosartorya fumigata).